We begin with the raw amino-acid sequence, 750 residues long: Photosystem I P700 chlorophyll a apoprotein A1 (750 aa).

The next 8 membrane-spanning stretches (helical) occupy residues 70 to 93 (VFSA…FHGA), 156 to 179 (LYCT…FHYH), 195 to 219 (LNHH…HVSL), 291 to 309 (IAHH…GHMY), 346 to 369 (WHAQ…HHMY), 385 to 411 (LSLF…IFMV), 433 to 455 (AIIS…LYIH), and 531 to 549 (FLVH…LILL). Positions 573 and 582 each coordinate [4Fe-4S] cluster. A run of 2 helical transmembrane segments spans residues 589-610 (HVFL…HFSW) and 664-686 (LSAY…MFLF). Residue His675 coordinates chlorophyll a'. 2 residues coordinate chlorophyll a: Met683 and Tyr691. Residue Trp692 coordinates phylloquinone. A helical transmembrane segment spans residues 724–744 (AVGVTHYLLGGIATTWAFFLA).

Belongs to the PsaA/PsaB family. In terms of assembly, the PsaA/B heterodimer binds the P700 chlorophyll special pair and subsequent electron acceptors. PSI consists of a core antenna complex that captures photons, and an electron transfer chain that converts photonic excitation into a charge separation. The eukaryotic PSI reaction center is composed of at least 11 subunits. The cofactor is P700 is a chlorophyll a/chlorophyll a' dimer, A0 is one or more chlorophyll a, A1 is one or both phylloquinones and FX is a shared 4Fe-4S iron-sulfur center..

The protein resides in the plastid. Its subcellular location is the chloroplast thylakoid membrane. It catalyses the reaction reduced [plastocyanin] + hnu + oxidized [2Fe-2S]-[ferredoxin] = oxidized [plastocyanin] + reduced [2Fe-2S]-[ferredoxin]. In terms of biological role, psaA and PsaB bind P700, the primary electron donor of photosystem I (PSI), as well as the electron acceptors A0, A1 and FX. PSI is a plastocyanin-ferredoxin oxidoreductase, converting photonic excitation into a charge separation, which transfers an electron from the donor P700 chlorophyll pair to the spectroscopically characterized acceptors A0, A1, FX, FA and FB in turn. Oxidized P700 is reduced on the lumenal side of the thylakoid membrane by plastocyanin. This is Photosystem I P700 chlorophyll a apoprotein A1 from Lepidium virginicum (Virginia pepperweed).